Reading from the N-terminus, the 854-residue chain is Protein unc-33 (854 aa).

Disordered regions lie at residues 57–114 (ETVS…IPAP), 130–327 (ELFG…DGNG), and 794–854 (VERV…TGFW). 2 stretches are compositionally biased toward polar residues: residues 58 to 68 (TVSNKSRSSEG) and 75 to 97 (RPNS…TSAR). Positions 193 to 202 (KVLRGEKSTP) are enriched in basic and acidic residues. Residues 240-257 (VDDEEEPEAEAQEMEEPQ) are compositionally biased toward acidic residues. The span at 279–298 (HPSEDGDSTRNGETPTDRRN) shows a compositional bias: basic and acidic residues. A compositionally biased stretch (polar residues) spans 802 to 811 (SSQQQKPQQN). The span at 816-827 (NSGDFDRNRTKV) shows a compositional bias: basic and acidic residues.

Belongs to the metallo-dependent hydrolases superfamily. Hydantoinase/dihydropyrimidinase family. As to quaternary structure, isoform a: Probable monomer. Isoform b: Probable homodimer. Isoform c: Probable homodimer. Probable heterodimer composed of isoform b and isoform c. Interacts with unc-14 and kinesin-1 motor complex light chain klc-1; both interactions regulate unc-33 neurite localization. Interacts with fln-1 (via calponin-homology (CH) domains and filamin repeat 18-19). Isoform c: Interacts with vab-8 isoform a. As to expression, expressed in ventral cord and nerve ring (at protein level). Isoform a: Expressed in nerve ring (at protein level). Expressed in the nervous system, two amphid socket cells and weakly in non-neuronal pharyngeal cells.

The protein resides in the cell projection. It is found in the axon. Its subcellular location is the dendrite. In terms of biological role, during neurogenesis, plays an essential role in axonal guidance and outgrowth by regulating the polarization of both microtubule and actin cytoskeletons. Establishes the asymmetry of axonal and dendrite microtubules and the polarized sorting of neuronal proteins. This is achieved in part by regulating the localization of kinesin-like protein unc-104. In neurons without a distal microtubule-organizing center (MTOC), also controls the organization of microtubules in dendrites. During the dorso-ventral axonal guidance and outgrowth of VD neurons, required downstream of Rac GTPases ced-10 and mig-2 to inhibit growth cone filopodial protrusion mediated by the unc-6/netrin receptor unc-40-unc-5. Specifically, regulates growth cone filopodial protrusion polarity, and thus migration, by promoting F-actin polarization and by restricting plus-end microtubule accumulation in the growth cone. Probably downstream of mab-20/Sema2a and mab-20 receptor plx-2, regulates the guidance of DD/VD neuron axons by modulating fln-1 interaction with F-actin which results in the remodeling of the actin cytoskeleton. In hermaphrodites, involved in sex myoblast (SM) migration by regulating the gonad-dependent repulsion of SMs. Functionally, in neurons, required for the polarized sorting of axonal proteins. In PLM neuron, regulates innexin unc-9 gap junction turnover by suppressing unc-9 transport out of gap junctions. Plays a role in locomotion and egg-laying. In PLM neuron, regulates innexin unc-9 gap junction turnover by suppressing unc-9 transport out of gap junctions. The polypeptide is Protein unc-33 (Caenorhabditis elegans).